Reading from the N-terminus, the 299-residue chain is Ficolin-3 (299 aa).

An N-terminal signal peptide occupies residues 1-23 (MDLLWILPSLWLLLLGGPACLKT). Positions 44–81 (PSCPGAPGSPGEKGAPGPQGPPGPPGKMGPKGEPGDPV) are disordered. The Collagen-like domain maps to 48-80 (GAPGSPGEKGAPGPQGPPGPPGKMGPKGEPGDP). Residues P50, P53, P59, P65, P68, and P77 each carry the hydroxyproline modification. Pro residues predominate over residues 61-70 (PQGPPGPPGK). A Fibrinogen C-terminal domain is found at 84-299 (LRCQEGPRNC…PYRRVRMMLR (216 aa)). Cystine bridges form between C86–C110 and C93–C121. A glycan (N-linked (GlcNAc...) (complex) asparagine) is linked at N189. Positions 237, 239, 241, and 243 each coordinate Ca(2+). C245 and C258 are oxidised to a cystine. 258–259 (CY) is a binding site for a carbohydrate.

Belongs to the ficolin lectin family. As to quaternary structure, homotrimer. May form an octadecamer consisting of an elementary trimer unit. Does not interact with fibronectin, elastin or zymosan. Interacts with MASP1 and MASP2. The N-terminus is blocked. As to expression, liver and lung. In liver it is produced by bile duct epithelial cells and hepatocytes. In lung it is produced by both ciliated bronchial epithelial cells and type II alveolar epithelial cells.

It localises to the secreted. Functionally, may function in innate immunity through activation of the lectin complement pathway. Calcium-dependent and GlcNAc-binding lectin. Has affinity with GalNAc, GlcNAc, D-fucose, as mono/oligosaccharide and lipopolysaccharides from S.typhimurium and S.minnesota. This is Ficolin-3 (FCN3) from Homo sapiens (Human).